We begin with the raw amino-acid sequence, 282 residues long: Acetylglutamate kinase (282 aa).

Substrate is bound by residues 62-63, R84, and N178; that span reads GG. L-arginine is bound by residues K196, S214, and 266–269; that span reads EIFS.

Homohexamer.

The protein localises to the cytoplasm. The enzyme catalyses N-acetyl-L-glutamate + ATP = N-acetyl-L-glutamyl 5-phosphate + ADP. It participates in amino-acid biosynthesis; L-arginine biosynthesis; N(2)-acetyl-L-ornithine from L-glutamate: step 2/4. Its activity is regulated as follows. Allosterically inhibited by arginine. In terms of biological role, catalyzes the ATP-dependent phosphorylation of N-acetyl-L-glutamate. In Thermotoga maritima (strain ATCC 43589 / DSM 3109 / JCM 10099 / NBRC 100826 / MSB8), this protein is Acetylglutamate kinase.